We begin with the raw amino-acid sequence, 830 residues long: AdoMet-dependent rRNA methyltransferase SPB1 (830 aa).

Positions 58, 60, 78, 94, and 119 each coordinate S-adenosyl-L-methionine. The active-site Proton acceptor is the lysine 159. A coiled-coil region spans residues 345–388 (LTEEEQIEKELQEMQQKQNLKKKREKRKQNEIKQKEITRMQMQM). Disordered stretches follow at residues 485–529 (AKEA…SDSD) and 565–642 (EADL…AREV). Composition is skewed to acidic residues over residues 516-529 (VDDD…SDSD), 591-610 (VSEE…DSDF), and 618-630 (DESD…EDEA). Residues 631-642 (ERSQKEKHAREV) show a composition bias toward basic and acidic residues.

Belongs to the class I-like SAM-binding methyltransferase superfamily. RNA methyltransferase RlmE family. SPB1 subfamily. Component of the nucleolar and nucleoplasmic pre-60S ribosomal particle.

The protein resides in the nucleus. It is found in the nucleolus. The enzyme catalyses a ribonucleotide in rRNA + S-adenosyl-L-methionine = a 2'-O-methylribonucleotide in rRNA + S-adenosyl-L-homocysteine + H(+). Its function is as follows. Required for proper assembly of pre-ribosomal particles during the biogenesis of the 60S ribosomal subunit. This chain is AdoMet-dependent rRNA methyltransferase SPB1, found in Eremothecium gossypii (strain ATCC 10895 / CBS 109.51 / FGSC 9923 / NRRL Y-1056) (Yeast).